Consider the following 90-residue polypeptide: Small ribosomal subunit protein bS20 (90 aa).

Belongs to the bacterial ribosomal protein bS20 family.

In terms of biological role, binds directly to 16S ribosomal RNA. The polypeptide is Small ribosomal subunit protein bS20 (Rickettsia akari (strain Hartford)).